A 111-amino-acid polypeptide reads, in one-letter code: Large ribosomal subunit protein uL22 (111 aa).

Belongs to the universal ribosomal protein uL22 family. As to quaternary structure, part of the 50S ribosomal subunit.

Its function is as follows. This protein binds specifically to 23S rRNA; its binding is stimulated by other ribosomal proteins, e.g. L4, L17, and L20. It is important during the early stages of 50S assembly. It makes multiple contacts with different domains of the 23S rRNA in the assembled 50S subunit and ribosome. The globular domain of the protein is located near the polypeptide exit tunnel on the outside of the subunit, while an extended beta-hairpin is found that lines the wall of the exit tunnel in the center of the 70S ribosome. The protein is Large ribosomal subunit protein uL22 of Francisella tularensis subsp. tularensis (strain FSC 198).